The chain runs to 23 residues: Phallacidin proprotein (23 aa).

Residue Pro-1 is a propeptide. Positions 2-8 (AWLVDCP) form a cross-link, cyclopeptide (Ala-Pro). A cross-link (2'-cysteinyl-6'-hydroxytryptophan sulfoxide (Trp-Cys)) is located at residues 3 to 7 (WLVDC). Residues 9-23 (CVGDDVNFILTRGQK) constitute a propeptide that is removed on maturation.

The protein belongs to the MSDIN fungal toxin family. Post-translationally, processed by the macrocyclase-peptidase enzyme POPB to yield a toxic cyclic heptapeptide. POPB first removes 10 residues from the N-terminus. Conformational trapping of the remaining peptide forces the enzyme to release this intermediate rather than proceed to macrocyclization. The enzyme rebinds the remaining peptide in a different conformation and catalyzes macrocyclization of the N-terminal 7 residues.

Functionally, major toxin that belongs to the bicyclic heptapeptides called phallotoxins. Although structurally related to amatoxins, phallotoxins have a different mode of action, which is the stabilization of F-actin. Phallotoxins are poisonous when administered parenterally, but not orally because of poor absorption. The polypeptide is Phallacidin proprotein (Amanita fuligineoides).